Here is a 296-residue protein sequence, read N- to C-terminus: MSHPVMHTDFPGLKLLARGKVRDIYDLGETLLLVTSDRISAFDVIMNEPIPDKGFVLTEISSFWFRQMEDIVSNHIISTDVDEFPAACRPHADLLRGRSMLVKKARPLPVECIVRGYVSGSGWKEYQSSGSICGISLPPGLRESDRLPEPIFTPSTKAELGTHDENISFERMTELCGRELAEQARDYTLKIYGRARELADQKGIIIADTKFEFGVFEGELIIIDECMTPDSSRFWLKDDYRPGGPQPSFDKQFLRDYLEGLDWNKTAPAPALPAEIIAKTAQMYREALSRITGISL.

The protein belongs to the SAICAR synthetase family.

The catalysed reaction is 5-amino-1-(5-phospho-D-ribosyl)imidazole-4-carboxylate + L-aspartate + ATP = (2S)-2-[5-amino-1-(5-phospho-beta-D-ribosyl)imidazole-4-carboxamido]succinate + ADP + phosphate + 2 H(+). It functions in the pathway purine metabolism; IMP biosynthesis via de novo pathway; 5-amino-1-(5-phospho-D-ribosyl)imidazole-4-carboxamide from 5-amino-1-(5-phospho-D-ribosyl)imidazole-4-carboxylate: step 1/2. In Pelobacter propionicus (strain DSM 2379 / NBRC 103807 / OttBd1), this protein is Phosphoribosylaminoimidazole-succinocarboxamide synthase.